The following is a 475-amino-acid chain: Na(+)/H(+) antiporter NhaA 2 (475 aa).

12 helical membrane-spanning segments follow: residues 44 to 64 (AQATASVFLLVATITALWWAN), 92 to 112 (LKHIINDGLMVIFFFFIGLEI), 130 to 150 (LILCALGGMICPAVIYSLFNW), 156 to 176 (IGWGIPMATDTAFALGALTLV), 186 to 206 (AFLVGLAIVDDVGAIVVIALF), 211 to 231 (ISVIFLSISFSLIAFLAIANY), 232 to 252 (AGVLRPIFYILIGIAAWWTML), 255 to 275 (GVHPTFAGVAIALTVPARPML), 331 to 351 (ALDLPVSLFVLPLFALVNAGV), 368 to 388 (LGIVIGLVIGKFVGISGACWL), 406 to 426 (VIGMSLIAGIGFTMSTFIATL), and 442 to 462 (ILFASLLSAILGLLYLRIIAA).

This sequence belongs to the NhaA Na(+)/H(+) (TC 2.A.33) antiporter family.

It is found in the cell inner membrane. The catalysed reaction is Na(+)(in) + 2 H(+)(out) = Na(+)(out) + 2 H(+)(in). Its function is as follows. Na(+)/H(+) antiporter that extrudes sodium in exchange for external protons. The polypeptide is Na(+)/H(+) antiporter NhaA 2 (Psychromonas ingrahamii (strain DSM 17664 / CCUG 51855 / 37)).